The chain runs to 92 residues: Large ribosomal subunit protein uL23 (92 aa).

The protein belongs to the universal ribosomal protein uL23 family. As to quaternary structure, part of the 50S ribosomal subunit. Contacts protein L29, and trigger factor when it is bound to the ribosome.

Its function is as follows. One of the early assembly proteins it binds 23S rRNA. One of the proteins that surrounds the polypeptide exit tunnel on the outside of the ribosome. Forms the main docking site for trigger factor binding to the ribosome. The sequence is that of Large ribosomal subunit protein uL23 from Bdellovibrio bacteriovorus (strain ATCC 15356 / DSM 50701 / NCIMB 9529 / HD100).